The following is a 279-amino-acid chain: HTH-type transcriptional regulator HdfR (279 aa).

Residues 1–58 (MDTELLKTFLEVSRTRHFGRAAESLYLTQSAVSFRIRQLENQLGVNLFTRHRNNIRLT) form the HTH lysR-type domain. Positions 18–37 (FGRAAESLYLTQSAVSFRIR) form a DNA-binding region, H-T-H motif.

This sequence belongs to the LysR transcriptional regulatory family.

In terms of biological role, negatively regulates the transcription of the flagellar master operon flhDC by binding to the upstream region of the operon. The sequence is that of HTH-type transcriptional regulator HdfR from Shigella boydii serotype 18 (strain CDC 3083-94 / BS512).